A 355-amino-acid polypeptide reads, in one-letter code: uncharacterized protein (355 aa).

This is an uncharacterized protein from Acanthamoeba polyphaga (Amoeba).